Here is a 148-residue protein sequence, read N- to C-terminus: NADH-ubiquinone oxidoreductase chain 3 (148 aa).

3 helical membrane-spanning segments follow: residues 19 to 39 (FYMI…YIIT), 70 to 90 (FILI…ILPY), and 99 to 119 (IYGL…FIIE).

This sequence belongs to the complex I subunit 3 family.

Its subcellular location is the mitochondrion membrane. The catalysed reaction is a ubiquinone + NADH + 5 H(+)(in) = a ubiquinol + NAD(+) + 4 H(+)(out). Functionally, core subunit of the mitochondrial membrane respiratory chain NADH dehydrogenase (Complex I) that is believed to belong to the minimal assembly required for catalysis. Complex I functions in the transfer of electrons from NADH to the respiratory chain. The immediate electron acceptor for the enzyme is believed to be ubiquinone. This Wickerhamomyces canadensis (Yeast) protein is NADH-ubiquinone oxidoreductase chain 3 (ND3).